Here is a 283-residue protein sequence, read N- to C-terminus: Phospholipid phosphatase 1 (283 aa).

The Cytoplasmic portion of the chain corresponds to 1 to 6 (MFDKTR). Residues 5–7 (TRL) carry the PDZ-binding; involved in localization to the apical cell membrane motif. The helical transmembrane segment at 7-27 (LPYVALDVICVLLAGLPFAIL) threads the bilayer. The Extracellular portion of the chain corresponds to 28–53 (TSRHTPFQRGIFCNDDSIKYPYKEDT). Residues 54 to 74 (IPYALLGGIVIPFCIIVMSIG) traverse the membrane as a helical segment. The Cytoplasmic portion of the chain corresponds to 75-88 (ESLSVYFNVLHSNS). The chain crosses the membrane as a helical span at residues 89 to 109 (FVGNPYIATIYKAVGAFLFGV). Over 110–164 (SASQSLTDIAKYTIGSLRPHFLAICNPDWSKINCSDGYIEDYICQGNEEKVKEGR) the chain is Extracellular. The phosphatase sequence motif I stretch occupies residues 120 to 128 (KYTIGSLRP). Asparagine 142 is a glycosylation site (N-linked (GlcNAc...) asparagine). Residues 165–185 (LSFYSGHSSFSMYCMLFVALY) traverse the membrane as a helical segment. The tract at residues 168–171 (YSGH) is phosphatase sequence motif II. The Proton donors role is filled by histidine 171. The Cytoplasmic segment spans residues 186-199 (LQARMKGDWARLLR). Residues 200 to 220 (PMLQFGLIAFSIYVGLSRVSD) form a helical membrane-spanning segment. Residues 216–227 (SRVSDYKHHWSD) are phosphatase sequence motif III. Topologically, residues 221 to 229 (YKHHWSDVT) are extracellular. Residue histidine 223 is the Nucleophile of the active site. Residues 230-250 (VGLIQGAAMAILVALYVSDFF) traverse the membrane as a helical segment. Residues 251-283 (KDTHSYKERKEEDPHTTLHETASSRNYSTNHEP) lie on the Cytoplasmic side of the membrane. Residues 260–283 (KEEDPHTTLHETASSRNYSTNHEP) are disordered. Polar residues predominate over residues 269 to 283 (HETASSRNYSTNHEP).

It belongs to the PA-phosphatase related phosphoesterase family. Forms functional homodimers and homooligomers that are not required for substrate recognition and catalytic activity. Can also form heterooligomers with PLPP2 and PLPP3. In terms of processing, N-glycosylated. N-linked sugars are of the complex type. N-glycosylation is not required for the phosphatase activity. Widely expressed. Highly expressed in kidney and lung. Almost undetectable in brain, heart, bone, muscle or spleen.

Its subcellular location is the cell membrane. It is found in the apical cell membrane. It localises to the membrane raft. The protein localises to the membrane. The protein resides in the caveola. It carries out the reaction a 1,2-diacyl-sn-glycero-3-phosphate + H2O = a 1,2-diacyl-sn-glycerol + phosphate. The catalysed reaction is 1,2-dihexadecanoyl-sn-glycero-3-phosphate + H2O = 1,2-dihexadecanoyl-sn-glycerol + phosphate. The enzyme catalyses 1,2-di-(9Z-octadecenoyl)-sn-glycero-3-phosphate + H2O = 1,2-di-(9Z-octadecenoyl)-sn-glycerol + phosphate. It catalyses the reaction a monoacyl-sn-glycero-3-phosphate + H2O = a monoacylglycerol + phosphate. It carries out the reaction (9Z)-octadecenoyl-sn-glycero-3-phosphate + H2O = (9Z-octadecenoyl)-glycerol + phosphate. The catalysed reaction is a 1-acyl-sn-glycero-3-phosphate + H2O = a 1-acyl-sn-glycerol + phosphate. The enzyme catalyses 1-(9Z-octadecenoyl)-sn-glycero-3-phosphate + H2O = 1-(9Z-octadecenoyl)-sn-glycerol + phosphate. It catalyses the reaction a 1,2-diacyl-sn-glycerol 3-diphosphate + H2O = a 1,2-diacyl-sn-glycero-3-phosphate + phosphate + H(+). It carries out the reaction sphing-4-enine 1-phosphate + H2O = sphing-4-enine + phosphate. The catalysed reaction is an N-acylsphing-4-enine 1-phosphate + H2O = an N-acylsphing-4-enine + phosphate. The enzyme catalyses N-(octanoyl)-sphing-4-enine-1-phosphate + H2O = N-octanoylsphing-4-enine + phosphate. It catalyses the reaction N-(9Z-octadecenoyl)-ethanolamine phosphate + H2O = N-(9Z-octadecenoyl) ethanolamine + phosphate. It carries out the reaction 1-hexadecanoyl-2-(9Z-octadecenoyl)-sn-glycero-3-phosphate + H2O = 1-hexadecanoyl-2-(9Z-octadecenoyl)-sn-glycerol + phosphate. Its pathway is lipid metabolism; phospholipid metabolism. With respect to regulation, magnesium-independent phospholipid phosphatase. Insensitive to N-ethylmaleimide. Magnesium-independent phospholipid phosphatase of the plasma membrane that catalyzes the dephosphorylation of a variety of glycerolipid and sphingolipid phosphate esters including phosphatidate/PA, lysophosphatidate/LPA, diacylglycerol pyrophosphate/DGPP, sphingosine 1-phosphate/S1P and ceramide 1-phosphate/C1P. Also acts on N-oleoyl ethanolamine phosphate/N-(9Z-octadecenoyl)-ethanolamine phosphate, a potential physiological compound. Through its extracellular phosphatase activity allows both the hydrolysis and the cellular uptake of these bioactive lipid mediators from the milieu, regulating signal transduction in different cellular processes. It is for instance essential for the extracellular hydrolysis of S1P and subsequent conversion into intracellular S1P. Involved in the regulation of inflammation, platelets activation, cell proliferation and migration among other processes. May also have an intracellular activity to regulate phospholipid-mediated signaling pathways. The sequence is that of Phospholipid phosphatase 1 from Mus musculus (Mouse).